The primary structure comprises 91 residues: Small ribosomal subunit protein uS19 (91 aa).

The protein belongs to the universal ribosomal protein uS19 family.

Protein S19 forms a complex with S13 that binds strongly to the 16S ribosomal RNA. The protein is Small ribosomal subunit protein uS19 of Acinetobacter baumannii (strain AB307-0294).